The following is a 229-amino-acid chain: MQETQIPITQIDETPKAVEPSVWKNLFTQGVWTNNSTLVQLLGLCPLLAVSNNVTNALGLGLATLLVLTITNTIISLFRKVIPHDIRIPIYVMIIATAVTTIQLLMNAFAFPVYQSLGIFVPLIVTNCIVIGRAEAFASKNSVAHSAFDGFAMGLGMTLSLVVLGAIREIIGNGTLFDGLDLLLGSWAKALRMDLLHLDSGLLLAILPPGAFIGLGLILAVKNIIDRKK.

Helical transmembrane passes span 58-78, 82-102, 105-125, 147-167, and 201-221; these read LGLGLATLLVLTITNTIISLF, IPHDIRIPIYVMIIATAVTTI, LMNAFAFPVYQSLGIFVPLIV, AFDGFAMGLGMTLSLVVLGAI, and GLLLAILPPGAFIGLGLILAV.

The protein belongs to the NqrDE/RnfAE family. The complex is composed of six subunits: RnfA, RnfB, RnfC, RnfD, RnfE and RnfG.

It localises to the cell inner membrane. Functionally, part of a membrane-bound complex that couples electron transfer with translocation of ions across the membrane. The chain is Ion-translocating oxidoreductase complex subunit E from Glaesserella parasuis serovar 5 (strain SH0165) (Haemophilus parasuis).